The following is a 196-amino-acid chain: Thymidylate kinase (196 aa).

7–14 is a binding site for ATP; sequence GIDGSGKT.

Belongs to the thymidylate kinase family.

The enzyme catalyses dTMP + ATP = dTDP + ADP. Its function is as follows. Phosphorylation of dTMP to form dTDP in both de novo and salvage pathways of dTTP synthesis. The protein is Thymidylate kinase of Wolbachia pipientis wMel.